Here is a 176-residue protein sequence, read N- to C-terminus: Ribosome maturation factor RimM (176 aa).

The region spanning 97 to 176 (EDEFYWRDLI…QILVDWDPDF (80 aa)) is the PRC barrel domain.

The protein belongs to the RimM family. In terms of assembly, binds ribosomal protein uS19.

It is found in the cytoplasm. Functionally, an accessory protein needed during the final step in the assembly of 30S ribosomal subunit, possibly for assembly of the head region. Essential for efficient processing of 16S rRNA. May be needed both before and after RbfA during the maturation of 16S rRNA. It has affinity for free ribosomal 30S subunits but not for 70S ribosomes. The polypeptide is Ribosome maturation factor RimM (Shewanella oneidensis (strain ATCC 700550 / JCM 31522 / CIP 106686 / LMG 19005 / NCIMB 14063 / MR-1)).